Consider the following 99-residue polypeptide: Putative protein adenylyltransferase MJ0141 (99 aa).

Positions 29–43 match the GSX(10)DXD motif motif; the sequence is GSYARGDYDEESDVD. The Mg(2+) site is built by Asp-41 and Asp-43.

The protein belongs to the MntA antitoxin family. Requires Mg(2+) as cofactor.

The catalysed reaction is L-tyrosyl-[protein] + ATP = O-(5'-adenylyl)-L-tyrosyl-[protein] + diphosphate. It catalyses the reaction O-(5'-adenylyl)-L-tyrosyl-[protein] + ATP = O-[5'-(adenylyl-(5'-&gt;3')-adenylyl)]-L-tyrosyl-[protein] + diphosphate. Putative antitoxin component of a putative type VII toxin-antitoxin (TA) system. Its cognate toxin might be MF0142, which it might AMPylate. The chain is Putative protein adenylyltransferase MJ0141 from Methanocaldococcus jannaschii (strain ATCC 43067 / DSM 2661 / JAL-1 / JCM 10045 / NBRC 100440) (Methanococcus jannaschii).